Reading from the N-terminus, the 65-residue chain is Large ribosomal subunit protein bL35 (65 aa).

Belongs to the bacterial ribosomal protein bL35 family.

The protein is Large ribosomal subunit protein bL35 of Photorhabdus laumondii subsp. laumondii (strain DSM 15139 / CIP 105565 / TT01) (Photorhabdus luminescens subsp. laumondii).